Consider the following 271-residue polypeptide: Aquaporin-11 (271 aa).

At 1-14 the chain is on the cytoplasmic side; that stretch reads MSALLGLRPEVQDT. A helical transmembrane segment spans residues 15–35; the sequence is CISLGLMLLFVLFVGLARVIA. Topologically, residues 36 to 41 are lumenal; it reads RQQLHR. Residues 42–62 traverse the membrane as a helical segment; the sequence is PVVHAFVLEFLATFQLCCCTH. Residues 63 to 76 lie on the Cytoplasmic side of the membrane; the sequence is ELQVLSEQDSAHPT. The chain crosses the membrane as a helical span at residues 77–97; it reads WTLTLIYFFSLVHGLTLVGTA. At 98–166 the chain is on the lumenal side; it reads SNPCGVMMQM…NPIHTDMSKA (69 aa). Residues 99 to 101 carry the NPC motif; that stretch reads NPC. The chain crosses the membrane as a helical span at residues 167–187; sequence IIIEAICSFIFHSALLHFQEV. Residues 188-194 lie on the Cytoplasmic side of the membrane; the sequence is RTKLRIH. The chain crosses the membrane as a helical span at residues 195 to 215; the sequence is LLAALITFLAYAGGSLTGALF. An NPA motif is present at residues 216 to 218; it reads NPA. Topologically, residues 216–234 are lumenal; it reads NPALALSLHFPCFDELFYK. Residues 235–255 traverse the membrane as a helical segment; that stretch reads FFVVYWLAPSVGVLMMILMFS. Over 256-271 the chain is Cytoplasmic; that stretch reads FFLPWLHNNQMTNKKE.

The protein belongs to the MIP/aquaporin (TC 1.A.8) family. AQP11/AQP12 subfamily. In terms of assembly, homodimer; disulfide-linked. Homotetramer. Can also form homomultimer. Post-translationally, not glycosylated. As to expression, highly expressed in the S1 proximal tubule segment,. Expressed in the testis, kidney, and liver. Weakly expressed in the heart, brain, and muscle. Highly expressed in the testis. Expressed in the proximal tubule of the cortex of 8-day-old mouse kidney. Expressed in retina specifically at retinal Mueller glial cells. Expressed in brain. Expressed abundantly at the choroid plexus but also expressed weakly in the parenchyma. Expressed at the capillary endothelium in the cerebral white matter. Expressed in adult testis, in the elongated spermatids (ES) and in residual bodies inside Sertoli cells.

The protein localises to the endoplasmic reticulum membrane. It is found in the cytoplasmic vesicle membrane. It localises to the cell membrane. It catalyses the reaction H2O(in) = H2O(out). The enzyme catalyses glycerol(in) = glycerol(out). It carries out the reaction H2O2(out) = H2O2(in). Its function is as follows. Channel protein that facilitates the transport of water, glycerol and hydrogen peroxide across membrane of cell or organelles guaranteeing intracellular homeostasis in several organes like liver, kidney and brain. In situation of stress, participates in endoplasmic reticulum (ER) homeostasis by regulating redox homeostasis through the transport of hydrogen peroxide across the endoplasmic reticulum membrane thereby regulating the oxidative stress through the NADPH oxidase 2 pathway. Plays a role by maintaining an environment suitable for translation or protein foldings in the ER lumen namely by participating in the PKD1 glycosylation processing resulting in regulation of PKD1 membrane trafficking thereby preventing the accumulation of unfolding protein in ER. Plays a role in the proximal tubule function by regulating its endosomal acidification. May play a role in postnatal kidney development. The polypeptide is Aquaporin-11 (Mus musculus (Mouse)).